Consider the following 337-residue polypeptide: Holliday junction branch migration complex subunit RuvB (337 aa).

Residues 1-179 (MTHQVSVLHQ…FSFTGRMSYY (179 aa)) form a large ATPase domain (RuvB-L) region. ATP-binding positions include Leu-18, Arg-19, Gly-60, Lys-63, Thr-64, Ser-65, 126-128 (EDY), Arg-169, Tyr-179, and Arg-216. Thr-64 is a Mg(2+) binding site. The interval 180–250 (SDEDLTTILK…VAEKALAMLL (71 aa)) is small ATPAse domain (RuvB-S). Residues 253–337 (DWGLNEIDIK…DNLQSLGEEK (85 aa)) are head domain (RuvB-H). DNA-binding residues include Lys-308 and Arg-313.

It belongs to the RuvB family. As to quaternary structure, homohexamer. Forms an RuvA(8)-RuvB(12)-Holliday junction (HJ) complex. HJ DNA is sandwiched between 2 RuvA tetramers; dsDNA enters through RuvA and exits via RuvB. An RuvB hexamer assembles on each DNA strand where it exits the tetramer. Each RuvB hexamer is contacted by two RuvA subunits (via domain III) on 2 adjacent RuvB subunits; this complex drives branch migration. In the full resolvosome a probable DNA-RuvA(4)-RuvB(12)-RuvC(2) complex forms which resolves the HJ.

Its subcellular location is the cytoplasm. It carries out the reaction ATP + H2O = ADP + phosphate + H(+). In terms of biological role, the RuvA-RuvB-RuvC complex processes Holliday junction (HJ) DNA during genetic recombination and DNA repair, while the RuvA-RuvB complex plays an important role in the rescue of blocked DNA replication forks via replication fork reversal (RFR). RuvA specifically binds to HJ cruciform DNA, conferring on it an open structure. The RuvB hexamer acts as an ATP-dependent pump, pulling dsDNA into and through the RuvAB complex. RuvB forms 2 homohexamers on either side of HJ DNA bound by 1 or 2 RuvA tetramers; 4 subunits per hexamer contact DNA at a time. Coordinated motions by a converter formed by DNA-disengaged RuvB subunits stimulates ATP hydrolysis and nucleotide exchange. Immobilization of the converter enables RuvB to convert the ATP-contained energy into a lever motion, pulling 2 nucleotides of DNA out of the RuvA tetramer per ATP hydrolyzed, thus driving DNA branch migration. The RuvB motors rotate together with the DNA substrate, which together with the progressing nucleotide cycle form the mechanistic basis for DNA recombination by continuous HJ branch migration. Branch migration allows RuvC to scan DNA until it finds its consensus sequence, where it cleaves and resolves cruciform DNA. In Chlamydia caviae (strain ATCC VR-813 / DSM 19441 / 03DC25 / GPIC) (Chlamydophila caviae), this protein is Holliday junction branch migration complex subunit RuvB.